Here is a 413-residue protein sequence, read N- to C-terminus: Probable alpha-tubulin polyglutamylase Ttll1 (413 aa).

The region spanning 2-370 (ASKKLKYKTD…DDWNDDSSKT (369 aa)) is the TTL domain. ATP is bound by residues 184–187 (SRYI), K197, and D199.

This sequence belongs to the tubulin polyglutamylase family.

It is found in the cytoplasm. Its subcellular location is the cytoskeleton. The protein resides in the cilium basal body. It localises to the contractile vacuole. Probable tubulin polyglutamylase with a strong preference for alpha-tubulin. Modifies alpha-tubulin, generating side chains of glutamate on the gamma-carboxyl groups of specific glutamate residues within the C-terminal tail of alpha-tubulin. This Tetrahymena thermophila (strain SB210) protein is Probable alpha-tubulin polyglutamylase Ttll1 (Ttll1).